The sequence spans 331 residues: Vacuolar protein sorting-associated protein 26B (331 aa).

The segment at 310 to 331 is disordered; the sequence is AAQRYEGSNPEPTSAQAKEETD.

It belongs to the VPS26 family. In terms of assembly, component of the heterotrimeric retromer cargo-selective complex (CSC) which is believed to associate with variable sorting nexins to form functionally distinct retromer complex variants.

The protein localises to the cytoplasm. Its subcellular location is the membrane. It localises to the endosome. Its function is as follows. Acts as a component of the retromer cargo-selective complex (CSC). The CSC is believed to be the core functional component of retromer or respective retromer complex variants acting to prevent missorting of selected transmembrane cargo proteins into the lysosomal degradation pathway. Retromer mediates retrograde transport of cargo proteins from endosomes to the trans-Golgi network (TGN). This Danio rerio (Zebrafish) protein is Vacuolar protein sorting-associated protein 26B (vps26b).